Consider the following 906-residue polypeptide: uncharacterized protein (906 aa).

Disordered regions lie at residues 231–322 (KEDA…PSTI) and 865–906 (AGAY…DEDE). Positions 236 to 250 (TTKQTTTTTTTTPQT) are enriched in low complexity. A compositionally biased stretch (pro residues) spans 264 to 281 (TPTPAPAPKPTTPKPTPA). Residues 302 to 314 (SVNNIPTPSDTNE) show a composition bias toward polar residues. The segment covering 867–906 (AYEDDDDDEGEGNEDDEDNDENEDEDEGEGEGDSSEDEDE) has biased composition (acidic residues).

This is an uncharacterized protein from Dictyostelium sp. (strain GA11) (Slime mold).